The following is a 186-amino-acid chain: Ribosome rescue factor SmrB (186 aa).

The Smr domain maps to 99–174 (IDLHGLTQHQ…SDAAIIVIIE (76 aa)).

It belongs to the SmrB family. Associates with collided ribosomes, but not with correctly translating polysomes.

Functionally, acts as a ribosome collision sensor. Detects stalled/collided disomes (pairs of ribosomes where the leading ribosome is stalled and a second ribosome has collided with it) and endonucleolytically cleaves mRNA at the 5' boundary of the stalled ribosome. Stalled/collided disomes form a new interface (primarily via the 30S subunits) that binds SmrB. Cleaved mRNA becomes available for tmRNA ligation, leading to ribosomal subunit dissociation and rescue of stalled ribosomes. This Buchnera aphidicola subsp. Acyrthosiphon pisum (strain Tuc7) protein is Ribosome rescue factor SmrB.